The chain runs to 112 residues: DNA-binding protein PF1087 (112 aa).

The protein belongs to the PDCD5 family.

The sequence is that of DNA-binding protein PF1087 from Pyrococcus furiosus (strain ATCC 43587 / DSM 3638 / JCM 8422 / Vc1).